Consider the following 145-residue polypeptide: Large ribosomal subunit protein eL32 (145 aa).

This sequence belongs to the eukaryotic ribosomal protein eL32 family.

The protein is Large ribosomal subunit protein eL32 (rpl32e) of Aeropyrum pernix (strain ATCC 700893 / DSM 11879 / JCM 9820 / NBRC 100138 / K1).